The following is a 158-amino-acid chain: Small ribosomal subunit protein bS6 (158 aa).

Residues 98–158 (EAPSAPLARR…DRDEDQNEEN (61 aa)) are disordered. Composition is skewed to basic and acidic residues over residues 106-117 (RRGEDRDRDRGF) and 127-150 (DSGR…RSDR).

The protein belongs to the bacterial ribosomal protein bS6 family.

Binds together with bS18 to 16S ribosomal RNA. In Acidiphilium cryptum (strain JF-5), this protein is Small ribosomal subunit protein bS6.